A 405-amino-acid chain; its full sequence is MEQIKLDSIADAIEAIRKGEVIIVVDDEDRENEGDFICAAECVTPEIINFMSKEGRGLICAPISEARCTELKLDLMVGSNTATHETPFTVSVDLLGNGCTTGISASDRSKTIRALVDPDTKPEDLGRPGHIFPLKAKDEGVLRRVGHTEAAVDLARLAGFKPAGVLIEIMSEDGSMARLPELKQIATKFNLKLISIKDLIEYRLTHESLVKREIGVDMPTNLGDFDLIAFRQISTGEVHLALIKGTWEKDEPVMVRVHSSCVTGDIFGSCRCDCGPQLHKAMEMIQQEGKGVILYMNQEGRGIGLLNKLKAYKLQEQGRDTVEANLELGFKMDQRDYGTGAQILRDLNISKLRLITNNPVKRAALAGYGLEITEAVPIEIPSNPHNLEYLKTKRDKMGHTILKKD.

Residues 1 to 205 (MEQIKLDSIA…IKDLIEYRLT (205 aa)) are DHBP synthase. Residues 30–31 (RE), aspartate 35, 144–148 (RVGHT), and glutamate 168 contribute to the D-ribulose 5-phosphate site. Glutamate 31 contacts Mg(2+). Histidine 147 is a Mg(2+) binding site. The tract at residues 206–405 (HESLVKREIG…KMGHTILKKD (200 aa)) is GTP cyclohydrolase II. 256–260 (RVHSS) is a binding site for GTP. Zn(2+)-binding residues include cysteine 261, cysteine 272, and cysteine 274. GTP-binding positions include glutamine 277, 299 to 301 (EGR), and threonine 321. Aspartate 333 functions as the Proton acceptor; for GTP cyclohydrolase activity in the catalytic mechanism. Arginine 335 functions as the Nucleophile; for GTP cyclohydrolase activity in the catalytic mechanism. The GTP site is built by threonine 356 and lysine 361.

It in the N-terminal section; belongs to the DHBP synthase family. The protein in the C-terminal section; belongs to the GTP cyclohydrolase II family. Requires Mg(2+) as cofactor. It depends on Mn(2+) as a cofactor. Zn(2+) is required as a cofactor.

It catalyses the reaction D-ribulose 5-phosphate = (2S)-2-hydroxy-3-oxobutyl phosphate + formate + H(+). It carries out the reaction GTP + 4 H2O = 2,5-diamino-6-hydroxy-4-(5-phosphoribosylamino)-pyrimidine + formate + 2 phosphate + 3 H(+). It participates in cofactor biosynthesis; riboflavin biosynthesis; 2-hydroxy-3-oxobutyl phosphate from D-ribulose 5-phosphate: step 1/1. Its pathway is cofactor biosynthesis; riboflavin biosynthesis; 5-amino-6-(D-ribitylamino)uracil from GTP: step 1/4. Functionally, catalyzes the conversion of D-ribulose 5-phosphate to formate and 3,4-dihydroxy-2-butanone 4-phosphate. In terms of biological role, catalyzes the conversion of GTP to 2,5-diamino-6-ribosylamino-4(3H)-pyrimidinone 5'-phosphate (DARP), formate and pyrophosphate. This chain is Riboflavin biosynthesis protein RibBA, found in Cytophaga hutchinsonii (strain ATCC 33406 / DSM 1761 / CIP 103989 / NBRC 15051 / NCIMB 9469 / D465).